The chain runs to 507 residues: Xaa-Pro aminopeptidase 3 (507 aa).

The N-terminal 31 residues, 1-31 (MPWLLSAPKLVPAVANVRGLSGCMLCSQRRY), are a transit peptide targeting the mitochondrion. Residues 54 to 79 (HPHLLRPGEVTPGLSQVEYALRRHKL) are interaction with TNFRSF1B. Tyr-300, Asp-331, Asp-342, His-424, His-431, Glu-451, and Glu-475 together coordinate substrate. Residues Asp-331, Asp-342, and His-424 each coordinate Mn(2+). 2 residues coordinate Mn(2+): Glu-451 and Glu-475.

The protein belongs to the peptidase M24B family. As to quaternary structure, homodimer. Isoform 1 interacts with TNFRSF1B/TNFR2 (activated) and TRAF2. Mn(2+) is required as a cofactor. As to expression, isoform 1 and isoform 2 are widely expressed, with isoform 1 being more abundant.

It is found in the mitochondrion. It localises to the cytoplasm. It catalyses the reaction Release of any N-terminal amino acid, including proline, that is linked to proline, even from a dipeptide or tripeptide.. Functionally, catalyzes the removal of a penultimate prolyl residue from the N-termini of peptides, such as Leu-Pro-Ala. Also shows low activity towards peptides with Ala or Ser at the P1 position. Its function is as follows. Promotes TNFRSF1B-mediated phosphorylation of MAPK8/JNK1 and MAPK9/JNK2, suggesting a function as an adapter protein for TNFRSF1B; the effect is independent of XPNPEP3 peptidase activity. May inhibit apoptotic cell death induced via TNF-TNFRSF1B signaling. The polypeptide is Xaa-Pro aminopeptidase 3 (XPNPEP3) (Homo sapiens (Human)).